Reading from the N-terminus, the 477-residue chain is Ribulose bisphosphate carboxylase large chain (477 aa).

Positions 1–2 (MS) are excised as a propeptide. At P3 the chain carries N-acetylproline. K14 carries the post-translational modification N6,N6,N6-trimethyllysine. Substrate-binding residues include N123 and T173. Catalysis depends on K175, which acts as the Proton acceptor. Residue K177 coordinates substrate. Mg(2+) is bound by residues K201, D203, and E204. An N6-carboxylysine modification is found at K201. Residue H294 is the Proton acceptor of the active site. Substrate-binding residues include R295, H327, and S379.

The protein belongs to the RuBisCO large chain family. Type I subfamily. As to quaternary structure, heterohexadecamer of 8 large chains and 8 small chains; disulfide-linked. The disulfide link is formed within the large subunit homodimers. The cofactor is Mg(2+). Post-translationally, the disulfide bond which can form in the large chain dimeric partners within the hexadecamer appears to be associated with oxidative stress and protein turnover.

It localises to the plastid. The protein localises to the chloroplast. The enzyme catalyses 2 (2R)-3-phosphoglycerate + 2 H(+) = D-ribulose 1,5-bisphosphate + CO2 + H2O. The catalysed reaction is D-ribulose 1,5-bisphosphate + O2 = 2-phosphoglycolate + (2R)-3-phosphoglycerate + 2 H(+). In terms of biological role, ruBisCO catalyzes two reactions: the carboxylation of D-ribulose 1,5-bisphosphate, the primary event in carbon dioxide fixation, as well as the oxidative fragmentation of the pentose substrate in the photorespiration process. Both reactions occur simultaneously and in competition at the same active site. The chain is Ribulose bisphosphate carboxylase large chain from Digitalis purpurea (Common foxglove).